The sequence spans 607 residues: Protein PLASTID MOVEMENT IMPAIRED 2 (607 aa).

2 coiled-coil regions span residues 66–295 (KAKK…NAEL) and 329–445 (MLER…ESRR).

Belongs to the WEB family. Interacts with WEB1. As to expression, ubiquitous but preferentially in chloroplast-containing tissues.

The protein resides in the cytoplasm. Functionally, required for the chloroplast avoidance response under high intensity blue light. This avoidance response consists in the relocation of chloroplasts on the anticlinal side of exposed cells. Acts in association with WEB1 to maintain the velocity of chloroplast photorelocation movement via cp-actin filaments regulation. This chain is Protein PLASTID MOVEMENT IMPAIRED 2 (PMI2), found in Arabidopsis thaliana (Mouse-ear cress).